Reading from the N-terminus, the 985-residue chain is Guanine nucleotide exchange protein smcr8b (985 aa).

One can recognise a uDENN FLCN/SMCR8-type domain in the interval isoleucine 47–isoleucine 225. The segment covering asparagine 242–lysine 292 has biased composition (basic and acidic residues). Disordered regions lie at residues asparagine 242–asparagine 301, glutamine 502–glutamate 528, and glutamate 639–asparagine 659. The cDENN FLCN/SMCR8-type domain occupies arginine 390–serine 895. Residues glutamine 502–serine 514 are compositionally biased toward polar residues. The region spanning phenylalanine 904–lysine 962 is the dDENN FLCN/SMCR8-type domain.

The protein belongs to the SMCR8 family. In terms of assembly, component of the C9orf72-SMCR8 complex. The C9orf72-SMCR8 complex associates with the ATG1/ULK1 kinase complex.

Its subcellular location is the cytoplasm. The protein localises to the nucleus. Its function is as follows. Component of the C9orf72-SMCR8 complex, a complex that has guanine nucleotide exchange factor (GEF) activity and regulates autophagy. In the complex, C9orf72 and SMCR8 probably constitute the catalytic subunits that promote the exchange of GDP to GTP, converting inactive GDP-bound RAB8A and RAB39B into their active GTP-bound form, thereby promoting autophagosome maturation. The C9orf72-SMCR8 complex also acts as a negative regulator of autophagy initiation by interacting with the ATG1/ULK1 kinase complex and inhibiting its protein kinase activity. The chain is Guanine nucleotide exchange protein smcr8b (smcr8b) from Danio rerio (Zebrafish).